Here is a 376-residue protein sequence, read N- to C-terminus: MAGSSSSGVFNSLRATLDMREAELVEIPLIQPADPFLDMAGEDLRRRIFLTENENGDSLCLRPEFTIPVCRNHIALNAATPKRYAYLGEVFRQHRDGAAEFLQAGIEDLGASDEAASDARSIADALSCVRAAAPEAELEIVLGDQSVFAGMLKALGLPQGWRKKLLRSFGDANSMEQVLAELTGAQRRDPLPETLAGLVAEGDESGLARMLEAEMLEAGISPSAGRSPAEIARRLIEKEDLAATRFPASALDLLKQFLETRVTLDSAAVTLRAFASEHALDLAAVLQKFEARSEAIANAGIATKDIIYDASFGRPLDYYTGLVYEIRAPGVEKEGVLAGGGRYDRLLTMLGASENIPGVGFSIWLDRLQMLVGEKK.

The protein belongs to the class-II aminoacyl-tRNA synthetase family. HisZ subfamily. Heteromultimer composed of HisG and HisZ subunits.

The protein localises to the cytoplasm. It participates in amino-acid biosynthesis; L-histidine biosynthesis; L-histidine from 5-phospho-alpha-D-ribose 1-diphosphate: step 1/9. In terms of biological role, required for the first step of histidine biosynthesis. May allow the feedback regulation of ATP phosphoribosyltransferase activity by histidine. The chain is ATP phosphoribosyltransferase regulatory subunit from Brucella anthropi (strain ATCC 49188 / DSM 6882 / CCUG 24695 / JCM 21032 / LMG 3331 / NBRC 15819 / NCTC 12168 / Alc 37) (Ochrobactrum anthropi).